Reading from the N-terminus, the 139-residue chain is Succinate dehydrogenase assembly factor 2, mitochondrial (139 aa).

The transit peptide at 1–28 (MLRKTNLSNITTLLRSARCMNRMPQLRF) directs the protein to the mitochondrion.

Belongs to the SDHAF2 family. As to quaternary structure, interacts with the flavoprotein subunit within the SDH catalytic dimer.

It is found in the mitochondrion. Its subcellular location is the mitochondrion matrix. In terms of biological role, plays an essential role in the assembly of succinate dehydrogenase (SDH), an enzyme complex (also referred to as respiratory complex II) that is a component of both the tricarboxylic acid (TCA) cycle and the mitochondrial electron transport chain, and which couples the oxidation of succinate to fumarate with the reduction of ubiquinone (coenzyme Q) to ubiquinol. Required for flavinylation (covalent attachment of FAD) of the flavoprotein subunit of the SDH catalytic dimer. The sequence is that of Succinate dehydrogenase assembly factor 2, mitochondrial from Schizosaccharomyces pombe (strain 972 / ATCC 24843) (Fission yeast).